The following is a 571-amino-acid chain: Optineurin (571 aa).

Disordered stretches follow at residues 1–32 (MSHQPLSCLTEKGDSPSESTGNGPPHLAHPNL) and 100–144 (LSHE…DQLR). Positions 38 to 170 (EELLQQMKEL…VSELQLKLNS (133 aa)) form a coiled coil. Positions 58–209 (MKLNNQAMKG…GPTRTVSIGT (152 aa)) are interaction with Rab8. 2 stretches are compositionally biased toward basic and acidic residues: residues 100–123 (LSHENEKLKEELGKLKGKSERSSE) and 130–143 (RLPRAEAEQEKDQL). Residues 176–181 (DSFVEI) carry the LIR motif. Phosphoserine; by TBK1 is present on Ser177. Over residues 186-197 (GEAEGSVKEIKH) the composition is skewed to basic and acidic residues. Disordered regions lie at residues 186–210 (GEAEGSVKEIKHSPGPTRTVSIGTS) and 255–291 (VSDFEKKASNRSEIETQTEGSTEKENEEEKGPETVGS). Ser198 bears the Phosphoserine mark. Polar residues predominate over residues 201 to 210 (PTRTVSIGTS). Residues 233 to 502 (CLREGNQKVE…LLKENDAFED (270 aa)) are a coiled coil. 2 stretches are compositionally biased toward basic and acidic residues: residues 255-268 (VSDFEKKASNRSEI) and 275-286 (STEKENEEEKGP). Ser336 is modified (phosphoserine). An interaction with HD region spans residues 405 to 571 (TRKESEKVDR…LQIHVMDCII (167 aa)). The segment at 406–514 (RKESEKVDRA…RQSLMEMQSR (109 aa)) is interaction with MYO6. The short motif at 468-473 (DFHAER) is the UBAN element. At Ser520 the chain carries Phosphoserine. The CCHC NOA-type zinc finger occupies 541–571 (QRNIPIHSCPKCGEVLPDIDTLQIHVMDCII). Zn(2+) is bound by residues Cys549, Cys552, His565, and Cys569.

Self-associates. Interacts with HD. Interacts with GTF3A. Interacts with MYO6. Interacts (via UBAN) with ubiquitinated TFRC. Interacts with GTP-bound Rab8 (RAB8A and/or RAB8B). Interacts with TBC1D17. Interacts with TBK1. Interacts with TRAF3. Binds to linear ubiquitin chains. Interacts with LC3 family members MAP1LC3A, MAP1LC3B, GABARAP, GABARAPL1 and GABARAPL2; OPTN phosphorylation increases the association (at least with MAP1LC3B). Interacts with RAB12; the interaction may be indirect. Interacts with TBK1; this interaction leads to the Golgi localization of TBK1 and its subsequent activation. Interacts with palmitoyltransferase ZDHHC17/HIP14; the interaction does not lead to palmitoylation of OPTN. Interacts with CYLD. Interacts with TOM1; the interaction is indirect and is mediated by MYO6, which acts as a bridge between TOM1 and OPTN. Interacts with USP12; the interaction is independent of USP12 deubiquitinase activity and may be involved in regulation of autophagic flux. In terms of processing, phosphorylated by TBK1, leading to restrict bacterial proliferation in case of infection.

Its subcellular location is the cytoplasm. The protein localises to the perinuclear region. The protein resides in the golgi apparatus. It is found in the trans-Golgi network. It localises to the cytoplasmic vesicle. Its subcellular location is the autophagosome. The protein localises to the recycling endosome. Functionally, plays an important role in the maintenance of the Golgi complex, in membrane trafficking, in exocytosis, through its interaction with myosin VI and Rab8. Links myosin VI to the Golgi complex and plays an important role in Golgi ribbon formation. Negatively regulates the induction of IFNB in response to RNA virus infection. Plays a neuroprotective role in the eye and optic nerve. Probably part of the TNF-alpha signaling pathway that can shift the equilibrium toward induction of cell death. May act by regulating membrane trafficking and cellular morphogenesis via a complex that contains Rab8 and huntingtin (HD). Mediates the interaction of Rab8 with the probable GTPase-activating protein TBC1D17 during Rab8-mediated endocytic trafficking, such as that of transferrin receptor (TFRC/TfR); regulates Rab8 recruitment to tubules emanating from the endocytic recycling compartment. Autophagy receptor that interacts directly with both the cargo to become degraded and an autophagy modifier of the MAP1 LC3 family; targets ubiquitin-coated bacteria (xenophagy) and appears to function in the same pathway as SQSTM1 and CALCOCO2/NDP52. The protein is Optineurin (OPTN) of Macaca fascicularis (Crab-eating macaque).